The primary structure comprises 81 residues: Photosystem I iron-sulfur center (81 aa).

2 4Fe-4S ferredoxin-type domains span residues S2–W31 and I39–Y68. 8 residues coordinate [4Fe-4S] cluster: C11, C14, C17, C21, C48, C51, C54, and C58.

As to quaternary structure, the eukaryotic PSI reaction center is composed of at least 11 subunits. [4Fe-4S] cluster serves as cofactor.

It is found in the plastid. Its subcellular location is the chloroplast thylakoid membrane. The catalysed reaction is reduced [plastocyanin] + hnu + oxidized [2Fe-2S]-[ferredoxin] = oxidized [plastocyanin] + reduced [2Fe-2S]-[ferredoxin]. Its function is as follows. Apoprotein for the two 4Fe-4S centers FA and FB of photosystem I (PSI); essential for photochemical activity. FB is the terminal electron acceptor of PSI, donating electrons to ferredoxin. The C-terminus interacts with PsaA/B/D and helps assemble the protein into the PSI complex. Required for binding of PsaD and PsaE to PSI. PSI is a plastocyanin-ferredoxin oxidoreductase, converting photonic excitation into a charge separation, which transfers an electron from the donor P700 chlorophyll pair to the spectroscopically characterized acceptors A0, A1, FX, FA and FB in turn. The sequence is that of Photosystem I iron-sulfur center from Liriodendron tulipifera (Tuliptree).